We begin with the raw amino-acid sequence, 54 residues long: Photosystem II reaction center protein K (54 aa).

The propeptide occupies methionine 1 to glycine 17. Residues leucine 29 to alanine 49 traverse the membrane as a helical segment.

The protein belongs to the PsbK family. In terms of assembly, PSII is composed of 1 copy each of membrane proteins PsbA, PsbB, PsbC, PsbD, PsbE, PsbF, PsbH, PsbI, PsbJ, PsbK, PsbL, PsbM, PsbT, PsbY, PsbZ, Psb30/Ycf12, at least 3 peripheral proteins of the oxygen-evolving complex and a large number of cofactors. It forms dimeric complexes.

It is found in the plastid. The protein localises to the chloroplast thylakoid membrane. One of the components of the core complex of photosystem II (PSII). PSII is a light-driven water:plastoquinone oxidoreductase that uses light energy to abstract electrons from H(2)O, generating O(2) and a proton gradient subsequently used for ATP formation. It consists of a core antenna complex that captures photons, and an electron transfer chain that converts photonic excitation into a charge separation. This Euglena gracilis protein is Photosystem II reaction center protein K.